The following is a 252-amino-acid chain: Ribosome assembly factor mrt4 (252 aa).

Belongs to the universal ribosomal protein uL10 family. As to quaternary structure, associates with the pre-60S ribosomal particle.

It is found in the nucleus. The protein resides in the nucleolus. The protein localises to the cytoplasm. Functionally, component of the ribosome assembly machinery. Nuclear paralog of the ribosomal protein P0, it binds pre-60S subunits at an early stage of assembly in the nucleolus, and is replaced by P0 in cytoplasmic pre-60S subunits and mature 80S ribosomes. In Neurospora crassa (strain ATCC 24698 / 74-OR23-1A / CBS 708.71 / DSM 1257 / FGSC 987), this protein is Ribosome assembly factor mrt4.